An 87-amino-acid chain; its full sequence is Phosphoribosyl-ATP pyrophosphatase (87 aa).

The protein belongs to the PRA-PH family.

It localises to the cytoplasm. It carries out the reaction 1-(5-phospho-beta-D-ribosyl)-ATP + H2O = 1-(5-phospho-beta-D-ribosyl)-5'-AMP + diphosphate + H(+). The protein operates within amino-acid biosynthesis; L-histidine biosynthesis; L-histidine from 5-phospho-alpha-D-ribose 1-diphosphate: step 2/9. The chain is Phosphoribosyl-ATP pyrophosphatase from Kocuria rhizophila (strain ATCC 9341 / DSM 348 / NBRC 103217 / DC2201).